Consider the following 285-residue polypeptide: Seed agglutinin 2 (285 aa).

An N-terminal signal peptide occupies residues 1 to 31 (MASYKFKTQNSFLLLLSISFFFLLLLNKVNS). N-linked (GlcNAc...) asparagine glycosylation occurs at asparagine 147. Mn(2+) is bound by residues glutamate 156 and aspartate 158. Ca(2+) contacts are provided by aspartate 158, asparagine 162, and aspartate 166. Mn(2+)-binding residues include aspartate 166 and histidine 171.

This sequence belongs to the leguminous lectin family. Homotetramer. In terms of processing, mostly found in non-glycosylated form. Expressed in seed.

Its function is as follows. Seed lectin. The chain is Seed agglutinin 2 from Robinia pseudoacacia (Black locust).